The sequence spans 151 residues: ATP synthase subunit b' (151 aa).

The helical transmembrane segment at Thr18–Phe38 threads the bilayer.

It belongs to the ATPase B chain family. As to quaternary structure, F-type ATPases have 2 components, F(1) - the catalytic core - and F(0) - the membrane proton channel. F(1) has five subunits: alpha(3), beta(3), gamma(1), delta(1), epsilon(1). F(0) has four main subunits: a(1), b(1), b'(1) and c(10-14). The alpha and beta chains form an alternating ring which encloses part of the gamma chain. F(1) is attached to F(0) by a central stalk formed by the gamma and epsilon chains, while a peripheral stalk is formed by the delta, b and b' chains.

The protein resides in the cellular thylakoid membrane. F(1)F(0) ATP synthase produces ATP from ADP in the presence of a proton or sodium gradient. F-type ATPases consist of two structural domains, F(1) containing the extramembraneous catalytic core and F(0) containing the membrane proton channel, linked together by a central stalk and a peripheral stalk. During catalysis, ATP synthesis in the catalytic domain of F(1) is coupled via a rotary mechanism of the central stalk subunits to proton translocation. In terms of biological role, component of the F(0) channel, it forms part of the peripheral stalk, linking F(1) to F(0). The b'-subunit is a diverged and duplicated form of b found in plants and photosynthetic bacteria. This is ATP synthase subunit b' from Prochlorococcus marinus (strain MIT 9313).